The sequence spans 240 residues: 1-(5-phosphoribosyl)-5-[(5-phosphoribosylamino)methylideneamino] imidazole-4-carboxamide isomerase (240 aa).

Asp-9 functions as the Proton acceptor in the catalytic mechanism. Asp-131 serves as the catalytic Proton donor.

Belongs to the HisA/HisF family.

It is found in the cytoplasm. It carries out the reaction 1-(5-phospho-beta-D-ribosyl)-5-[(5-phospho-beta-D-ribosylamino)methylideneamino]imidazole-4-carboxamide = 5-[(5-phospho-1-deoxy-D-ribulos-1-ylimino)methylamino]-1-(5-phospho-beta-D-ribosyl)imidazole-4-carboxamide. Its pathway is amino-acid biosynthesis; L-histidine biosynthesis; L-histidine from 5-phospho-alpha-D-ribose 1-diphosphate: step 4/9. This is 1-(5-phosphoribosyl)-5-[(5-phosphoribosylamino)methylideneamino] imidazole-4-carboxamide isomerase from Azobacteroides pseudotrichonymphae genomovar. CFP2.